Here is an 875-residue protein sequence, read N- to C-terminus: Neurotrypsin (875 aa).

Positions 1–20 (MTLARFVLALMLGALPEVVG) are cleaved as a signal peptide. A glycan (N-linked (GlcNAc...) asparagine) is linked at N26. The tract at residues 29–88 (LHHSHRHSPPAGPHYPYYLPTQQRPPRTRPPPPLPRFPRPPRALPAQRPHALQAGHTPRP) is disordered. The span at 56–71 (TRPPPPLPRFPRPPRA) shows a compositional bias: pro residues. One can recognise a Kringle domain in the interval 93-165 (CPAGEPWVSV…GKVDWGYCDC (73 aa)). Intrachain disulfides connect C93/C165, C109/C149, C138/C163, C195/C259, C208/C269, C239/C249, C305/C369, C318/C379, C349/C359, C412/C475, C425/C485, C455/C465, C525/C589, C538/C599, C569/C579, C619/C750, C661/C677, C765/C831, C794/C808, and C821/C850. SRCR domains follow at residues 170 to 271 (VRLR…TCSF), 280 to 381 (IRLA…SCTP), 387 to 487 (IRLA…ACYP), and 500 to 601 (VRLM…ICDY). Residues 619–630 (CGLRLLHRRQKR) form a zymogen activation region region. In terms of domain architecture, Peptidase S1 spans 631 to 874 (IIGGKNSLRG…FVPWIKSVTK (244 aa)). The active-site Charge relay system is the H676. N-linked (GlcNAc...) asparagine glycosylation occurs at N683. Catalysis depends on D726, which acts as the Charge relay system. S825 functions as the Charge relay system in the catalytic mechanism.

The protein belongs to the peptidase S1 family. Brain and Leydig cells of the testis.

The protein localises to the secreted. In terms of biological role, plays a role in neuronal plasticity and the proteolytic action may subserve structural reorganizations associated with learning and memory operations. This is Neurotrypsin (PRSS12) from Homo sapiens (Human).